A 214-amino-acid chain; its full sequence is Ribosomal RNA large subunit methyltransferase E (214 aa).

S-adenosyl-L-methionine contacts are provided by glycine 60, tryptophan 62, aspartate 86, aspartate 102, and aspartate 127. Lysine 167 functions as the Proton acceptor in the catalytic mechanism.

It belongs to the class I-like SAM-binding methyltransferase superfamily. RNA methyltransferase RlmE family.

The protein resides in the cytoplasm. The catalysed reaction is uridine(2552) in 23S rRNA + S-adenosyl-L-methionine = 2'-O-methyluridine(2552) in 23S rRNA + S-adenosyl-L-homocysteine + H(+). Its function is as follows. Specifically methylates the uridine in position 2552 of 23S rRNA at the 2'-O position of the ribose in the fully assembled 50S ribosomal subunit. This chain is Ribosomal RNA large subunit methyltransferase E, found in Herminiimonas arsenicoxydans.